The sequence spans 281 residues: Energy-coupling factor transporter ATP-binding protein EcfA1 (281 aa).

The 237-residue stretch at Ile-6 to Asp-242 folds into the ABC transporter domain. Gly-42 to Ser-49 serves as a coordination point for ATP.

It belongs to the ABC transporter superfamily. Energy-coupling factor EcfA family. As to quaternary structure, forms a stable energy-coupling factor (ECF) transporter complex composed of 2 membrane-embedded substrate-binding proteins (S component), 2 ATP-binding proteins (A component) and 2 transmembrane proteins (T component).

It is found in the cell membrane. In terms of biological role, ATP-binding (A) component of a common energy-coupling factor (ECF) ABC-transporter complex. Unlike classic ABC transporters this ECF transporter provides the energy necessary to transport a number of different substrates. The protein is Energy-coupling factor transporter ATP-binding protein EcfA1 of Lactiplantibacillus plantarum (strain ATCC BAA-793 / NCIMB 8826 / WCFS1) (Lactobacillus plantarum).